The primary structure comprises 205 residues: Octanoyltransferase (205 aa).

A BPL/LPL catalytic domain is found at 30-205; sequence NLSDELVWLL…ILKQEFHKIF (176 aa). Residues 68 to 75, 140 to 142, and 153 to 155 each bind substrate; these read RGGKYTYH, AFG, and GIA. The Acyl-thioester intermediate role is filled by cysteine 171.

Belongs to the LipB family.

The protein localises to the cytoplasm. The catalysed reaction is octanoyl-[ACP] + L-lysyl-[protein] = N(6)-octanoyl-L-lysyl-[protein] + holo-[ACP] + H(+). Its pathway is protein modification; protein lipoylation via endogenous pathway; protein N(6)-(lipoyl)lysine from octanoyl-[acyl-carrier-protein]: step 1/2. Catalyzes the transfer of endogenously produced octanoic acid from octanoyl-acyl-carrier-protein onto the lipoyl domains of lipoate-dependent enzymes. Lipoyl-ACP can also act as a substrate although octanoyl-ACP is likely to be the physiological substrate. This chain is Octanoyltransferase, found in Wolbachia pipientis subsp. Culex pipiens (strain wPip).